The following is a 739-amino-acid chain: Phosphoribosylformylglycinamidine synthase subunit PurL (739 aa).

The active site involves His54. Residues Tyr57 and Lys96 each contribute to the ATP site. Glu98 serves as a coordination point for Mg(2+). Residues Ser99 to His102 and Arg121 each bind substrate. His100 functions as the Proton acceptor in the catalytic mechanism. Asp122 serves as a coordination point for Mg(2+). Gln245 is a substrate binding site. Residue Asp273 participates in Mg(2+) binding. Glu317–Gln319 serves as a coordination point for substrate. 2 residues coordinate ATP: Asp500 and Gly537. Asn538 provides a ligand contact to Mg(2+). Position 540 (Ser540) interacts with substrate.

Belongs to the FGAMS family. As to quaternary structure, monomer. Part of the FGAM synthase complex composed of 1 PurL, 1 PurQ and 2 PurS subunits.

Its subcellular location is the cytoplasm. It catalyses the reaction N(2)-formyl-N(1)-(5-phospho-beta-D-ribosyl)glycinamide + L-glutamine + ATP + H2O = 2-formamido-N(1)-(5-O-phospho-beta-D-ribosyl)acetamidine + L-glutamate + ADP + phosphate + H(+). It functions in the pathway purine metabolism; IMP biosynthesis via de novo pathway; 5-amino-1-(5-phospho-D-ribosyl)imidazole from N(2)-formyl-N(1)-(5-phospho-D-ribosyl)glycinamide: step 1/2. Functionally, part of the phosphoribosylformylglycinamidine synthase complex involved in the purines biosynthetic pathway. Catalyzes the ATP-dependent conversion of formylglycinamide ribonucleotide (FGAR) and glutamine to yield formylglycinamidine ribonucleotide (FGAM) and glutamate. The FGAM synthase complex is composed of three subunits. PurQ produces an ammonia molecule by converting glutamine to glutamate. PurL transfers the ammonia molecule to FGAR to form FGAM in an ATP-dependent manner. PurS interacts with PurQ and PurL and is thought to assist in the transfer of the ammonia molecule from PurQ to PurL. In Bacillus cereus (strain G9842), this protein is Phosphoribosylformylglycinamidine synthase subunit PurL.